Consider the following 477-residue polypeptide: Aspartyl/glutamyl-tRNA(Asn/Gln) amidotransferase subunit B (477 aa).

Belongs to the GatB/GatE family. GatB subfamily. As to quaternary structure, heterotrimer of A, B and C subunits.

The enzyme catalyses L-glutamyl-tRNA(Gln) + L-glutamine + ATP + H2O = L-glutaminyl-tRNA(Gln) + L-glutamate + ADP + phosphate + H(+). It catalyses the reaction L-aspartyl-tRNA(Asn) + L-glutamine + ATP + H2O = L-asparaginyl-tRNA(Asn) + L-glutamate + ADP + phosphate + 2 H(+). Allows the formation of correctly charged Asn-tRNA(Asn) or Gln-tRNA(Gln) through the transamidation of misacylated Asp-tRNA(Asn) or Glu-tRNA(Gln) in organisms which lack either or both of asparaginyl-tRNA or glutaminyl-tRNA synthetases. The reaction takes place in the presence of glutamine and ATP through an activated phospho-Asp-tRNA(Asn) or phospho-Glu-tRNA(Gln). In Legionella pneumophila (strain Paris), this protein is Aspartyl/glutamyl-tRNA(Asn/Gln) amidotransferase subunit B.